A 697-amino-acid chain; its full sequence is Phenylalanine--tRNA ligase beta subunit, chloroplastic (697 aa).

Residues 283-368 (NISRILFIDK…RIYGFDNFIS (86 aa)) enclose the B5 domain. Residues aspartate 346, aspartate 352, glutamate 355, and glutamate 356 each contribute to the Mg(2+) site. In terms of domain architecture, FDX-ACB spans 609-697 (SSYPSLTRDI…IDDLLNEYKL (89 aa)).

Belongs to the phenylalanyl-tRNA synthetase beta subunit family. Type 1 subfamily. As to quaternary structure, tetramer of two alpha and two beta subunits. Requires Mg(2+) as cofactor.

It is found in the plastid. Its subcellular location is the chloroplast. The catalysed reaction is tRNA(Phe) + L-phenylalanine + ATP = L-phenylalanyl-tRNA(Phe) + AMP + diphosphate + H(+). The sequence is that of Phenylalanine--tRNA ligase beta subunit, chloroplastic from Gracilaria tenuistipitata var. liui (Red alga).